The primary structure comprises 551 residues: Glucose-6-phosphate isomerase (551 aa).

Residue Glu-356 is the Proton donor of the active site. Catalysis depends on residues His-387 and Lys-515.

The protein belongs to the GPI family.

The protein resides in the cytoplasm. The enzyme catalyses alpha-D-glucose 6-phosphate = beta-D-fructose 6-phosphate. It participates in carbohydrate biosynthesis; gluconeogenesis. The protein operates within carbohydrate degradation; glycolysis; D-glyceraldehyde 3-phosphate and glycerone phosphate from D-glucose: step 2/4. Catalyzes the reversible isomerization of glucose-6-phosphate to fructose-6-phosphate. In Blochmanniella pennsylvanica (strain BPEN), this protein is Glucose-6-phosphate isomerase.